Consider the following 172-residue polypeptide: Small ribosomal subunit protein uS5 (172 aa).

Residues 17–80 (LREKMISVNR…EQARRNMFKV (64 aa)) enclose the S5 DRBM domain.

The protein belongs to the universal ribosomal protein uS5 family. In terms of assembly, part of the 30S ribosomal subunit. Contacts proteins S4 and S8.

With S4 and S12 plays an important role in translational accuracy. In terms of biological role, located at the back of the 30S subunit body where it stabilizes the conformation of the head with respect to the body. This chain is Small ribosomal subunit protein uS5, found in Burkholderia pseudomallei (strain 1106a).